The chain runs to 540 residues: Putative cysteine ligase BshC (540 aa).

Residues G455–I491 adopt a coiled-coil conformation.

It belongs to the BshC family.

Its function is as follows. Involved in bacillithiol (BSH) biosynthesis. May catalyze the last step of the pathway, the addition of cysteine to glucosamine malate (GlcN-Mal) to generate BSH. This is Putative cysteine ligase BshC from Desulforamulus reducens (strain ATCC BAA-1160 / DSM 100696 / MI-1) (Desulfotomaculum reducens).